The chain runs to 1257 residues: Neurocan core protein (1257 aa).

A signal peptide spans 1–22; it reads MGAESVWASGLLVLWLLLLVSG. The region spanning 37–157 is the Ig-like V-type domain; sequence HMLKSGSGPI…EQDLVTLEVT (121 aa). Cystine bridges form between Cys58–Cys139, Cys181–Cys252, Cys205–Cys226, Cys279–Cys354, and Cys303–Cys324. An N-linked (GlcNAc...) asparagine glycan is attached at Asn121. 2 consecutive Link domains span residues 159–254 and 258–356; these read VVFH…YCFA and GGEV…YCFR. N-linked (GlcNAc...) asparagine glycosylation occurs at Asn339. The segment at 361 to 391 is disordered; the sequence is TPQRGDSEIPSSGDEGEIVSAEGPPAPELKP. 2 O-linked (Xyl...) (chondroitin sulfate) serine glycosylation sites follow: Ser380 and Ser410. Residues 447–459 are compositionally biased toward low complexity; the sequence is SSTGVPSPSSLGV. 3 disordered regions span residues 447-493, 550-610, and 683-707; these read SSTG…FQQQ, GSLG…AVPS, and GAED…GSPE. A compositionally biased stretch (polar residues) spans 464 to 473; sequence TTPSGTQVAP. The segment covering 569–580 has biased composition (low complexity); that stretch reads SPSTVPSTDSTP. A glycan (N-linked (GlcNAc...) asparagine) is linked at Asn737. Ser944 carries O-linked (Xyl...) (chondroitin sulfate) serine glycosylation. The 37-residue stretch at 949–985 folds into the EGF-like 1 domain; it reads PTDPCENNPCLHGGTCRTNGTMYGCSCDQGYAGENCE. 11 disulfide bridges follow: Cys953/Cys964, Cys958/Cys973, Cys975/Cys984, Cys991/Cys1002, Cys996/Cys1011, Cys1013/Cys1022, Cys1029/Cys1040, Cys1057/Cys1149, Cys1125/Cys1141, Cys1156/Cys1199, and Cys1185/Cys1212. N-linked (GlcNAc...) asparagine glycosylation is present at Asn967. One can recognise an EGF-like 2; calcium-binding domain in the interval 987-1023; it reads DIDDCLCSPCENGGTCIDEVNGFICLCLPSYGGNLCE. Positions 1025 to 1154 constitute a C-type lectin domain; it reads DTEGCDRGWH…LPYVCKKGTV (130 aa). Residues 1154-1214 form the Sushi domain; the sequence is VLCGPPPAVE…WDRPQIVCTK (61 aa). N-linked (GlcNAc...) asparagine glycosylation occurs at Asn1164. Basic residues predominate over residues 1215–1244; it reads PRRSHRMRRHHHHPHRHHKPRKEHRKHKRH. The interval 1215–1257 is disordered; that stretch reads PRRSHRMRRHHHHPHRHHKPRKEHRKHKRHPAEDWEKDEGDFC.

It belongs to the aggrecan/versican proteoglycan family. Post-translationally, two isoforms were found that probably arise by proteolytic processing. The large isoform is predominant in early postnatal brain, the small isoform is found in adult brain. O-glycosylated; contains chondroitin sulfate. Early postnatal and adult brain; not expressed in kidney, lung, liver and muscle.

It localises to the secreted. May modulate neuronal adhesion and neurite growth during development by binding to neural cell adhesion molecules (NG-CAM and N-CAM). Chondroitin sulfate proteoglycan; binds to hyaluronic acid. The protein is Neurocan core protein (Ncan) of Rattus norvegicus (Rat).